The sequence spans 338 residues: UDP-glucose 4-epimerase (338 aa).

NAD(+) contacts are provided by residues 11-12 (YI), 31-36 (DNLCNS), 58-59 (DI), 80-84 (FAGLK), N99, S124, Y149, K153, and F178. The substrate site is built by S124 and Y149. Residue Y149 is the Proton acceptor of the active site. Substrate contacts are provided by residues N179, 199-200 (NL), 216-218 (AVF), R231, 292-295 (RDGD), and Y299.

It belongs to the NAD(P)-dependent epimerase/dehydratase family. Homodimer. The cofactor is NAD(+).

The catalysed reaction is UDP-alpha-D-glucose = UDP-alpha-D-galactose. It participates in carbohydrate metabolism; galactose metabolism. Involved in the metabolism of galactose. Catalyzes the conversion of UDP-galactose (UDP-Gal) to UDP-glucose (UDP-Glc) through a mechanism involving the transient reduction of NAD. This is UDP-glucose 4-epimerase (galE) from Salmonella typhi.